A 63-amino-acid polypeptide reads, in one-letter code: MPKMKSVRGAAKRFKVGKNKIKRGSAFRSHILTKKPSKRMRDLRQSQYVDSTNVSAVKKMLCI.

It belongs to the bacterial ribosomal protein bL35 family.

The protein is Large ribosomal subunit protein bL35 of Campylobacter fetus subsp. fetus (strain 82-40).